A 364-amino-acid polypeptide reads, in one-letter code: Uroporphyrinogen decarboxylase (364 aa).

Substrate contacts are provided by residues 28–32 (RQAGR), D78, Y160, T215, and H333.

It belongs to the uroporphyrinogen decarboxylase family. As to quaternary structure, homodimer.

The protein resides in the cytoplasm. It carries out the reaction uroporphyrinogen III + 4 H(+) = coproporphyrinogen III + 4 CO2. Its pathway is porphyrin-containing compound metabolism; protoporphyrin-IX biosynthesis; coproporphyrinogen-III from 5-aminolevulinate: step 4/4. Catalyzes the decarboxylation of four acetate groups of uroporphyrinogen-III to yield coproporphyrinogen-III. The protein is Uroporphyrinogen decarboxylase of Burkholderia cenocepacia (strain ATCC BAA-245 / DSM 16553 / LMG 16656 / NCTC 13227 / J2315 / CF5610) (Burkholderia cepacia (strain J2315)).